A 60-amino-acid chain; its full sequence is Metallothionein (60 aa).

The beta stretch occupies residues 1–28; the sequence is MDPCDCSKTGKCNCGGSCTCTNCSCTSC. The a divalent metal cation site is built by Cys4, Cys6, Cys12, Cys14, Cys18, Cys20, Cys23, Cys25, Cys28, Cys32, Cys33, Cys35, Cys36, Cys40, Cys43, Cys47, Cys49, Cys54, Cys58, and Cys59. The alpha stretch occupies residues 29-60; sequence KKSCCACCPSGCTKCASGCVCKGKTCDTTCCQ.

Belongs to the metallothionein superfamily. Type 1 family.

Metallothioneins have a high content of cysteine residues that bind various heavy metals. The protein is Metallothionein (mt) of Oryzias latipes (Japanese rice fish).